Here is a 404-residue protein sequence, read N- to C-terminus: Floricaula/leafy-like protein FL1 (404 aa).

Positions 210-251 are disordered; that stretch reads IGVPEHSSESDERKADTNKQKRRRSKEPGEDGEDRPREHPFI. 2 stretches are compositionally biased toward basic and acidic residues: residues 215-228 and 235-249; these read HSSE…DTNK and KEPG…REHP. 3 consecutive DNA-binding regions follow at residues 246-250, 315-322, and 386-389; these read REHPF, NKPKMRHY, and YVPT.

This sequence belongs to the FLO/LFY family. Expressed in both male and female cones, vegetative buds and needles, but not in the roots.

It localises to the nucleus. Probable transcription factor. This chain is Floricaula/leafy-like protein FL1, found in Pinus radiata (Monterey pine).